The primary structure comprises 649 residues: ATP-dependent zinc metalloprotease FtsH (649 aa).

Topologically, residues 1–18 (MQCSYPLARQLERSSALN) are cytoplasmic. A helical membrane pass occupies residues 19–39 (NNLFQKAAIWLVIALVLFTVF). Residues 40 to 115 (KQFDKPRAQD…VTGKADDEPN (76 aa)) lie on the Periplasmic side of the membrane. The chain crosses the membrane as a helical span at residues 116–136 (VLVQALYYLGPTLLIIVFWFY). Over 137–649 (MMRQMQGGGK…PATARADETV (513 aa)) the chain is Cytoplasmic. 210–217 (GPPGTGKT) contributes to the ATP binding site. Zn(2+) is bound at residue His432. Glu433 is an active-site residue. 2 residues coordinate Zn(2+): His436 and Asp508. The segment at 606–649 (IMAGRPPRPPRGAQGPNSGGNTPPGGSPVAPTNAPATARADETV) is disordered. Over residues 616–626 (RGAQGPNSGGN) the composition is skewed to low complexity.

The protein in the central section; belongs to the AAA ATPase family. This sequence in the C-terminal section; belongs to the peptidase M41 family. As to quaternary structure, homohexamer. It depends on Zn(2+) as a cofactor.

Its subcellular location is the cell inner membrane. Acts as a processive, ATP-dependent zinc metallopeptidase for both cytoplasmic and membrane proteins. Plays a role in the quality control of integral membrane proteins. This is ATP-dependent zinc metalloprotease FtsH from Cupriavidus metallidurans (strain ATCC 43123 / DSM 2839 / NBRC 102507 / CH34) (Ralstonia metallidurans).